The sequence spans 102 residues: uncharacterized protein (102 aa).

This is an uncharacterized protein from Sinorhizobium fredii (strain NBRC 101917 / NGR234).